Here is a 532-residue protein sequence, read N- to C-terminus: Zinc metalloproteinase nas-29 (532 aa).

Residues 1 to 22 form the signal peptide; it reads MISKNTSFCGFLILVLATCMSA. 4 N-linked (GlcNAc...) asparagine glycosylation sites follow: Asn5, Asn27, Asn70, and Asn106. The propeptide occupies 23 to 134; the sequence is QFVSNESIKL…NGESTDRTKR (112 aa). The 201-residue stretch at 135 to 335 folds into the Peptidase M12A domain; the sequence is QAYLDNNYPA…HIMNQHYQCQ (201 aa). 6 disulfides stabilise this stretch: Cys179–Cys334, Cys201–Cys222, Cys338–Cys358, Cys360–Cys369, Cys380–Cys408, and Cys435–Cys456. His230 lines the Zn(2+) pocket. Glu231 is a catalytic residue. The Zn(2+) site is built by His234 and His240. One can recognise an EGF-like domain in the interval 330–370; sequence QHYQCQEKCPTQAPCQNGGFTNSRNCKVCKCPTGFGGAYCQ. Residues 380 to 494 enclose the CUB domain; the sequence is CGGYLNAEET…VSFEYSFVST (115 aa). Asn503 carries N-linked (GlcNAc...) asparagine glycosylation.

The cofactor is Zn(2+).

It localises to the secreted. Its function is as follows. Metalloprotease. This chain is Zinc metalloproteinase nas-29 (nas-29), found in Caenorhabditis elegans.